The primary structure comprises 362 residues: Caspase activity and apoptosis inhibitor 1 (362 aa).

The segment covering M1–R14 has biased composition (basic residues). Disordered stretches follow at residues M1–G44 and T65–Q101. Positions A19–V32 are enriched in low complexity. 2 stretches are compositionally biased toward gly residues: residues G33–G44 and T65–W74. Residue S89 is modified to Phosphoserine. T90 carries the phosphothreonine modification. Residue K105 forms a Glycyl lysine isopeptide (Lys-Gly) (interchain with G-Cter in SUMO2) linkage. S121 and S204 each carry phosphoserine. Disordered regions lie at residues S226–E251, G269–Q291, and L309–P332. Residues R235–E251 show a composition bias toward basic and acidic residues. Over residues E273 to E282 the composition is skewed to low complexity. Residues E282–S312 adopt a coiled-coil conformation. At S313 the chain carries Phosphoserine.

Functionally, anti-apoptotic protein that modulates a caspase-10 dependent mitochondrial caspase-3/9 feedback amplification loop. This Bos taurus (Bovine) protein is Caspase activity and apoptosis inhibitor 1 (CAAP1).